The chain runs to 159 residues: Putative UPF0479 protein YDR545C-A (159 aa).

2 consecutive transmembrane segments (helical) span residues 38–58 (IVFC…KVLQ) and 135–155 (VPMI…ISQH).

Belongs to the UPF0479 family.

The protein localises to the membrane. The sequence is that of Putative UPF0479 protein YDR545C-A from Saccharomyces cerevisiae (strain ATCC 204508 / S288c) (Baker's yeast).